Here is an 833-residue protein sequence, read N- to C-terminus: Neurogenic locus protein delta (833 aa).

The N-terminal stretch at 1–18 is a signal peptide; that stretch reads MHWIKCLLTAFICFTVIV. At 19–594 the chain is on the extracellular side; the sequence is QVHSSGSFEL…ARADGLTNAQ (576 aa). 2 disulfides stabilise this stretch: Cys-46/Cys-61 and Cys-68/Cys-82. Asn-98, Asn-137, and Asn-167 each carry an N-linked (GlcNAc...) asparagine glycan. The region spanning 182–226 is the DSL domain; that stretch reads VTCDLNYYGSGCAKFCRPRDDSFGHSTCSETGEIICLTGWQGDYC. Intrachain disulfides connect Cys-184/Cys-193, Cys-197/Cys-209, Cys-217/Cys-226, Cys-231/Cys-240, Cys-235/Cys-246, Cys-248/Cys-257, Cys-260/Cys-271, Cys-266/Cys-277, Cys-279/Cys-288, Cys-295/Cys-307, Cys-301/Cys-317, Cys-319/Cys-328, Cys-335/Cys-348, Cys-342/Cys-360, Cys-362/Cys-371, Cys-378/Cys-388, Cys-383/Cys-404, Cys-406/Cys-415, Cys-422/Cys-433, Cys-427/Cys-439, Cys-441/Cys-450, Cys-457/Cys-468, Cys-462/Cys-477, Cys-479/Cys-488, Cys-495/Cys-506, Cys-500/Cys-515, Cys-517/Cys-526, Cys-533/Cys-544, Cys-538/Cys-553, and Cys-555/Cys-564. EGF-like domains lie at 227–258, 256–289, 291–329, 331–372, 374–416, and 418–451; these read HIPK…ALCN, LCNE…LYCN, DLNY…DDCE, EIYS…KMCE, KVLT…PNCD, and QLDN…TRCE. The region spanning 453–489 is the EGF-like 7; calcium-binding domain; that stretch reads NIDDCLGHQCENGGTCIDMVNQYRCQCVPGFHGTHCS. The region spanning 491–527 is the EGF-like 8 domain; sequence KVDLCLIRPCANGGTCLNLNNDYQCTCRAGFTGKDCS. Residues 529-565 enclose the EGF-like 9; calcium-binding domain; the sequence is DIDECSSGPCHNGGTCMNRVNSFECVCANGFRGKQCD. The helical transmembrane segment at 595–617 threads the bilayer; the sequence is VVLIAVFSVAMPLVAVIAACVVF. The Cytoplasmic portion of the chain corresponds to 618–833; the sequence is CMKRKRKRAQ…RSVVCGTPHM (216 aa). The residue at position 666 (Thr-666) is a Phosphothreonine. The segment at 743–773 is disordered; that stretch reads QLNTDPTLMHRGSPAGSSAKGASGGGPGAAE. The span at 754–763 shows a compositional bias: low complexity; it reads GSPAGSSAKG.

In terms of assembly, interacts with Notch (N) via the EGF repeats and the N EGF repeats. Post-translationally, ubiquitinated by Mib, leading to its endocytosis and subsequent degradation. As to expression, detected in all areas with neurogenic abilities, for example the neurogenic ectoderm and the primordia of the sense organs. Later expression is restricted to those cells that have adopted a neural fate.

Its subcellular location is the membrane. Its function is as follows. Acts as a ligand for Notch (N) receptor. Essential for proper differentiation of ectoderm. Delta is required for the correct separation of neural and epidermal cell lineages. Fringe (fng) acts in the Golgi to determine the type of O-linked fucose on the EGF modules in N, altering the ability of N to bind with Delta. O-fut1 also has a role in modulating the interaction. This Drosophila melanogaster (Fruit fly) protein is Neurogenic locus protein delta.